The following is an 892-amino-acid chain: Alpha-actinin-1 (892 aa).

Met-1 bears the N-acetylmethionine mark. Residues 1–247 are actin-binding; sequence MDHYDSQQTN…IMTYVSSFYH (247 aa). Residue Ser-6 is modified to Phosphoserine. Residue Tyr-12 is modified to Phosphotyrosine; by FAK1. 2 consecutive Calponin-homology (CH) domains span residues 31-135 and 144-250; these read KQQR…LRFA and TSAK…HAFS. N6-acetyllysine occurs at positions 95 and 195. Spectrin repeat units lie at residues 274–384, 394–499, 509–620, and 630–733; these read QLME…WLLN, HLAE…ALER, QLYL…ALTE, and RLRK…EVEN. The interval 274 to 733 is interaction with DDN; sequence QLMEDYEKLA…IARTINEVEN (460 aa). Phosphoserine is present on Ser-471. At Lys-676 the chain carries N6-acetyllysine. Phosphoserine is present on Ser-677. EF-hand domains lie at 746–781 and 787–822; these read EQMN…LGYD and QGEA…ETAD. Asp-759, Asp-761, Ser-763, Thr-765, and Glu-770 together coordinate Ca(2+). Position 890 is a phosphoserine (Ser-890).

This sequence belongs to the alpha-actinin family. As to quaternary structure, homodimer; antiparallel. Interacts with MYOZ2, TTID and LPP. Interacts with DDN. Interacts with PSD. Interacts with MICALL2. Interacts with DNM2 and CTTN. Interacts with PDLIM1. Interacts with PDLIM2. Interacts with PDLIM4 (via PDZ domain). Interacts with IGSF8.

Its subcellular location is the cytoplasm. The protein localises to the cytoskeleton. It localises to the myofibril. It is found in the sarcomere. The protein resides in the z line. Its subcellular location is the cell membrane. The protein localises to the cell junction. It localises to the cell projection. It is found in the ruffle. Functionally, F-actin cross-linking protein which is thought to anchor actin to a variety of intracellular structures. Association with IGSF8 regulates the immune synapse formation and is required for efficient T-cell activation. The polypeptide is Alpha-actinin-1 (Actn1) (Mus musculus (Mouse)).